Reading from the N-terminus, the 201-residue chain is Small ribosomal subunit protein uS4 (201 aa).

The tract at residues Gly21–Lys43 is disordered. The S4 RNA-binding domain occupies Arg93 to Lys153.

This sequence belongs to the universal ribosomal protein uS4 family. As to quaternary structure, part of the 30S ribosomal subunit. Contacts protein S5. The interaction surface between S4 and S5 is involved in control of translational fidelity.

In terms of biological role, one of the primary rRNA binding proteins, it binds directly to 16S rRNA where it nucleates assembly of the body of the 30S subunit. With S5 and S12 plays an important role in translational accuracy. This chain is Small ribosomal subunit protein uS4, found in Levilactobacillus brevis (strain ATCC 367 / BCRC 12310 / CIP 105137 / JCM 1170 / LMG 11437 / NCIMB 947 / NCTC 947) (Lactobacillus brevis).